A 294-amino-acid polypeptide reads, in one-letter code: uncharacterized protein (294 aa).

The N-terminal stretch at 1–16 (MQNFMVLLLLIVAVVA) is a signal peptide. 2 N-linked (GlcNAc...) asparagine; by host glycosylation sites follow: N25 and N162.

This is an uncharacterized protein from Acheta domesticus (House cricket).